The sequence spans 251 residues: MTEEKDEYGTIVVARVAMEENMFNPQPDIPRIRNDSTHSYQQPESMLEKLNTYYTLAVVIAQLTIGVLGNSLTLVADATRIFADHLELFQYDRAATPGKRLTEIITVGITNVILFLLFVAFLLTASGRAATMEFDINRLYLSIGTAMAMTANTLQTLCHFRTWQRERSYHSSLYTGSKRNQLMHGFVYHFIAYFVLVSSLLIIVNKDYLIADVITTYATSLLILANISSIGYQLYHEYFSLEHPQDEYEPI.

4 consecutive transmembrane segments (helical) span residues 56 to 76, 104 to 124, 184 to 204, and 208 to 228; these read LAVV…TLVA, IITV…FLLT, HGFV…LIIV, and YLIA…ANIS.

The protein resides in the membrane. This is an uncharacterized protein from Caenorhabditis elegans.